A 176-amino-acid chain; its full sequence is Dual-action ribosomal maturation protein DarP (176 aa).

Positions 1 to 16 (MRLIDPDADLEFDPDS) are enriched in acidic residues. Positions 1 to 29 (MRLIDPDADLEFDPDSVYDGPSKSQKKRE) are disordered.

This sequence belongs to the DarP family.

The protein localises to the cytoplasm. Its function is as follows. Member of a network of 50S ribosomal subunit biogenesis factors which assembles along the 30S-50S interface, preventing incorrect 23S rRNA structures from forming. Promotes peptidyl transferase center (PTC) maturation. In Thiobacillus denitrificans (strain ATCC 25259 / T1), this protein is Dual-action ribosomal maturation protein DarP.